A 3232-amino-acid chain; its full sequence is D-lysergyl-peptide-synthetase subunit 1 (3232 aa).

Residues 90 to 474 (GCLTYDEMSI…LGRKDDQVKI (385 aa)) form an adenylation (A) domain 1 region. In terms of domain architecture, Carrier 1 spans 617 to 686 (REKLLQGCFA…TLREIVIVST (70 aa)). Serine 649 is modified (O-(pantetheine 4'-phosphoryl)serine). Residues 731–1122 (EDIYPCTHLQ…EHILTQIHSN (392 aa)) form a condensation (C) domain 1 region. The segment at 1165-1572 (QAKCQAQPDA…RRKDAQVKIR (408 aa)) is adenylation (A) domain 2. The region spanning 1717-1785 (TEHEISAIWA…TIRKLALARG (69 aa)) is the Carrier 2 domain. Position 1749 is an O-(pantetheine 4'-phosphoryl)serine (serine 1749). The interval 1835–2252 (ERIYPCSPIQ…ALPVLDEDQM (418 aa)) is condensation (C) domain 2. Residues 2276–2675 (QQCLRCPDSP…GRNDDQVKVR (400 aa)) form an adenylation (A) domain 3 region. Residues 2810-2878 (MEAELQRLVG…RVSDLARIVE (69 aa)) enclose the Carrier 3 domain. Position 2842 is an O-(pantetheine 4'-phosphoryl)serine (serine 2842). The interval 2943–3218 (LYFSKPVASE…LLHWLHQQHI (276 aa)) is cyclization (Cyc) domain.

It belongs to the NRP synthetase family.

The protein operates within alkaloid biosynthesis; ergot alkaloid biosynthesis. Functionally, D-lysergyl-peptide-synthetase subunit 1; part of the gene cluster that mediates the biosynthesis of fungal ergot alkaloid. DmaW catalyzes the first step of ergot alkaloid biosynthesis by condensing dimethylallyl diphosphate (DMAP) and tryptophan to form 4-dimethylallyl-L-tryptophan. The second step is catalyzed by the methyltransferase easF that methylates 4-dimethylallyl-L-tryptophan in the presence of S-adenosyl-L-methionine, resulting in the formation of 4-dimethylallyl-L-abrine. The catalase easC and the FAD-dependent oxidoreductase easE then transform 4-dimethylallyl-L-abrine to chanoclavine-I which is further oxidized by easD in the presence of NAD(+), resulting in the formation of chanoclavine-I aldehyde. Agroclavine dehydrogenase easG then mediates the conversion of chanoclavine-I aldehyde to agroclavine via a non-enzymatic adduct reaction: the substrate is an iminium intermediate that is formed spontaneously from chanoclavine-I aldehyde in the presence of glutathione. The presence of easA is not required to complete this reaction. Further conversion of agroclavine to paspalic acid is a two-step process involving oxidation of agroclavine to elymoclavine and of elymoclavine to paspalic acid, the second step being performed by the elymoclavine oxidase cloA. Paspalic acid is then further converted to D-lysergic acid. Ergopeptines are assembled from D-lysergic acid and three different amino acids by the D-lysergyl-peptide-synthetases composed each of a monomudular and a trimodular nonribosomal peptide synthetase subunit. LpsB and lpsC encode the monomodular subunits responsible for D-lysergic acid activation and incorporation into the ergopeptine backbone. LpsA1 and A2 subunits encode the trimodular nonribosomal peptide synthetase assembling the tripeptide portion of ergopeptines. LpsA1 is responsible for formation of the major ergopeptine, ergotamine, and lpsA2 for alpha-ergocryptine, the minor ergopeptine of the total alkaloid mixture elaborated by C.purpurea. D-lysergyl-tripeptides are assembled by the nonribosomal peptide synthetases and released as N-(D-lysergyl-aminoacyl)-lactams. Cyclolization of the D-lysergyl-tripeptides is performed by the Fe(2+)/2-ketoglutarate-dependent dioxygenase easH which introduces a hydroxyl group into N-(D-lysergyl-aminoacyl)-lactam at alpha-C of the aminoacyl residue followed by spontaneous condensation with the terminal lactam carbonyl group. The polypeptide is D-lysergyl-peptide-synthetase subunit 1 (Claviceps purpurea (Ergot fungus)).